The chain runs to 362 residues: Aminomethyltransferase (362 aa).

This sequence belongs to the GcvT family. As to quaternary structure, the glycine cleavage system is composed of four proteins: P, T, L and H.

It carries out the reaction N(6)-[(R)-S(8)-aminomethyldihydrolipoyl]-L-lysyl-[protein] + (6S)-5,6,7,8-tetrahydrofolate = N(6)-[(R)-dihydrolipoyl]-L-lysyl-[protein] + (6R)-5,10-methylene-5,6,7,8-tetrahydrofolate + NH4(+). In terms of biological role, the glycine cleavage system catalyzes the degradation of glycine. This chain is Aminomethyltransferase, found in Listeria innocua serovar 6a (strain ATCC BAA-680 / CLIP 11262).